Here is a 223-residue protein sequence, read N- to C-terminus: DNA mismatch repair protein MutH (223 aa).

The protein belongs to the MutH family.

It is found in the cytoplasm. Its function is as follows. Sequence-specific endonuclease that cleaves unmethylated GATC sequences. It is involved in DNA mismatch repair. The chain is DNA mismatch repair protein MutH from Shewanella oneidensis (strain ATCC 700550 / JCM 31522 / CIP 106686 / LMG 19005 / NCIMB 14063 / MR-1).